The following is a 354-amino-acid chain: tRNA pseudouridine synthase D (354 aa).

Asp86 serves as the catalytic Nucleophile. The TRUD domain maps to 162–309; it reads GVPNYFGPQR…LEVGRRALRL (148 aa).

It belongs to the pseudouridine synthase TruD family.

It catalyses the reaction uridine(13) in tRNA = pseudouridine(13) in tRNA. Its function is as follows. Responsible for synthesis of pseudouridine from uracil-13 in transfer RNAs. The protein is tRNA pseudouridine synthase D of Methylococcus capsulatus (strain ATCC 33009 / NCIMB 11132 / Bath).